Consider the following 470-residue polypeptide: Tubulin gamma chain (470 aa).

GTP is bound at residue 144–150; the sequence is AGGTGSG.

Belongs to the tubulin family.

It localises to the cytoplasm. Its subcellular location is the cytoskeleton. It is found in the microtubule organizing center. The protein resides in the spindle pole body. Functionally, tubulin is the major constituent of microtubules. The gamma chain is found at microtubule organizing centers (MTOC) such as the spindle poles or the centrosome, suggesting that it is involved in the minus-end nucleation of microtubule assembly. This is Tubulin gamma chain (TUB4) from Eremothecium gossypii (strain ATCC 10895 / CBS 109.51 / FGSC 9923 / NRRL Y-1056) (Yeast).